Reading from the N-terminus, the 1052-residue chain is Membrane-bound transcription factor site-1 protease (1052 aa).

Residues 1 to 17 (MKLVNIWLLLLVVLLCG) form the signal peptide. Positions 18 to 186 (KKHLGDRLEK…TGRHSSRRLL (169 aa)) are excised as a propeptide. S168 is modified (phosphoserine; by FAM20C). Residues 187-998 (RAIPRQVAQT…IMPGRYNQEV (812 aa)) are Lumenal-facing. The 283-residue stretch at 190–472 (PRQVAQTLQA…HGKLDLLRAY (283 aa)) folds into the Peptidase S8 domain. Residue D218 is the Charge relay system of the active site. N-linked (GlcNAc...) asparagine glycosylation is present at N236. Residue H249 is the Charge relay system of the active site. N305 carries an N-linked (GlcNAc...) asparagine glycan. The active-site Charge relay system is S414. N515 and N728 each carry an N-linked (GlcNAc...) asparagine glycan. Polar residues predominate over residues 877–887 (PSLSHSGNRQR). The tract at residues 877 to 899 (PSLSHSGNRQRPPSGAGSVTPER) is disordered. N939 carries N-linked (GlcNAc...) asparagine glycosylation. Residues 999–1021 (GQTIPVFAFLGAMVVLAFFVVQI) form a helical membrane-spanning segment. Topologically, residues 1022-1052 (NKAKSRPKRRKPRVKRPQLMQQVHPPKTPSV) are cytoplasmic. Residues 1027 to 1037 (RPKRRKPRVKR) are compositionally biased toward basic residues. A disordered region spans residues 1027 to 1052 (RPKRRKPRVKRPQLMQQVHPPKTPSV).

The protein belongs to the peptidase S8 family. Interacts with LYSET; this interaction bridges GNPTAB to MBTPS1. It depends on Ca(2+) as a cofactor. The 148 kDa zymogen is processed progressively into two membrane-bound 120 and 106 kDa forms in the endoplasmic reticulum, and late into a secreted 98 kDa form. The propeptide is autocatalytically removed through an intramolecular cleavage after Leu-186. Further cleavage generates 14, 10, and 8 kDa intermediates. In terms of tissue distribution, widely expressed.

Its subcellular location is the endoplasmic reticulum membrane. It localises to the golgi apparatus membrane. The catalysed reaction is Processes precursors containing basic and hydrophobic/aliphatic residues at P4 and P2, respectively, with a relatively relaxed acceptance of amino acids at P1 and P3.. Its activity is regulated as follows. Inhibited by divalent copper and zinc ions, but not by nickel or cobalt. Inhibited by its prosegment, but not smaller fragments. Inhibited by 4-(2-aminoethyl)benzenesulfonyl fluoride (AEBSF), a serine protease inhibitor. Functionally, serine protease that cleaves after hydrophobic or small residues, provided that Arg or Lys is in position P4: known substrates include SREBF1/SREBP1, SREBF2/SREBP2, BDNF, GNPTAB, ATF6, ATF6B and FAM20C. Cleaves substrates after Arg-Ser-Val-Leu (SREBP2), Arg-His-Leu-Leu (ATF6), Arg-Gly-Leu-Thr (BDNF) and its own propeptide after Arg-Arg-Leu-Leu. Catalyzes the first step in the proteolytic activation of the sterol regulatory element-binding proteins (SREBPs) SREBF1/SREBP1 and SREBF2/SREBP2. Also mediates the first step in the proteolytic activation of the cyclic AMP-dependent transcription factor ATF-6 (ATF6 and ATF6B). Mediates the protein cleavage of GNPTAB into subunit alpha and beta, thereby participating in biogenesis of lysosomes. Cleaves the propeptide from FAM20C which is required for FAM20C secretion from the Golgi apparatus membrane and for enhancement of FAM20C kinase activity, promoting osteoblast differentiation and biomineralization. Involved in the regulation of M6P-dependent Golgi-to-lysosome trafficking of lysosomal enzymes. It is required for the activation of CREB3L2/BBF2H7, a transcriptional activator of MIA3/TANGO and other genes controlling mega vesicle formation. Therefore, it plays a key role in the regulation of mega vesicle-mediated collagen trafficking. In astrocytes and osteoblasts, upon DNA damage and ER stress, mediates the first step of the regulated intramembrane proteolytic activation of the transcription factor CREB3L1, leading to the inhibition of cell-cycle progression. The protein is Membrane-bound transcription factor site-1 protease of Homo sapiens (Human).